The sequence spans 93 residues: Small integral membrane protein 41 (93 aa).

Residues V38–L58 traverse the membrane as a helical segment. A compositionally biased stretch (basic and acidic residues) spans R71–E80. Residues R71–S93 form a disordered region.

Its subcellular location is the membrane. In Homo sapiens (Human), this protein is Small integral membrane protein 41.